The sequence spans 176 residues: Imidazoleglycerol-phosphate dehydratase (176 aa).

It belongs to the imidazoleglycerol-phosphate dehydratase family.

It localises to the cytoplasm. The catalysed reaction is D-erythro-1-(imidazol-4-yl)glycerol 3-phosphate = 3-(imidazol-4-yl)-2-oxopropyl phosphate + H2O. It functions in the pathway amino-acid biosynthesis; L-histidine biosynthesis; L-histidine from 5-phospho-alpha-D-ribose 1-diphosphate: step 6/9. The chain is Imidazoleglycerol-phosphate dehydratase from Pyrococcus furiosus (strain ATCC 43587 / DSM 3638 / JCM 8422 / Vc1).